Here is a 161-residue protein sequence, read N- to C-terminus: Nucleotide-binding protein Bphy_0527 (161 aa).

This sequence belongs to the YajQ family.

Nucleotide-binding protein. The chain is Nucleotide-binding protein Bphy_0527 from Paraburkholderia phymatum (strain DSM 17167 / CIP 108236 / LMG 21445 / STM815) (Burkholderia phymatum).